Here is a 605-residue protein sequence, read N- to C-terminus: ATP-dependent RNA helicase DBP3 (605 aa).

The tract at residues 1–124 (MSAEELVASP…TPALSKKQQK (124 aa)) is disordered. The span at 54-66 (KDKKDKKEKKDKK) shows a compositional bias: basic residues. Over residues 104 to 114 (PVSTATPTESE) the composition is skewed to polar residues. A Q motif motif is present at residues 175 to 201 (LSIRDLPINSKLQPFLNKFEKPTPIQA). Residues 204–391 (WPALLSKKDV…STFLNNPLRI (188 aa)) enclose the Helicase ATP-binding domain. Position 217-224 (217-224 (AETGSGKT)) interacts with ATP. The short motif at 336-339 (DEAD) is the DEAD box element. In terms of domain architecture, Helicase C-terminal spans 424-575 (HLKAHLKVHP…EIPKEMDRFP (152 aa)).

It belongs to the DEAD box helicase family. DDX5/DBP2 subfamily.

It localises to the nucleus. The protein resides in the nucleolus. The catalysed reaction is ATP + H2O = ADP + phosphate + H(+). ATP-dependent RNA helicase required for 60S ribosomal subunit synthesis. Involved in efficient pre-rRNA processing, predominantly at site A3, which is necessary for the normal formation of 25S and 5.8S rRNAs. This chain is ATP-dependent RNA helicase DBP3 (DBP3), found in Cryptococcus neoformans var. neoformans serotype D (strain JEC21 / ATCC MYA-565) (Filobasidiella neoformans).